A 112-amino-acid chain; its full sequence is uncharacterized protein (112 aa).

2 coiled-coil regions span residues 15 to 53 (AEKK…FFKF) and 86 to 103 (LDYE…TERK).

This is an uncharacterized protein from Aquifex aeolicus (strain VF5).